We begin with the raw amino-acid sequence, 57 residues long: Large ribosomal subunit protein eL20 (57 aa).

It belongs to the eukaryotic ribosomal protein eL20 family. Part of the 50S ribosomal subunit. Binds 23S rRNA.

The chain is Large ribosomal subunit protein eL20 from Natronomonas pharaonis (strain ATCC 35678 / DSM 2160 / CIP 103997 / JCM 8858 / NBRC 14720 / NCIMB 2260 / Gabara) (Halobacterium pharaonis).